We begin with the raw amino-acid sequence, 445 residues long: Proline--tRNA ligase (445 aa).

The protein belongs to the class-II aminoacyl-tRNA synthetase family. ProS type 2 subfamily. Homodimer.

It localises to the cytoplasm. The catalysed reaction is tRNA(Pro) + L-proline + ATP = L-prolyl-tRNA(Pro) + AMP + diphosphate. Its function is as follows. Catalyzes the attachment of proline to tRNA(Pro) in a two-step reaction: proline is first activated by ATP to form Pro-AMP and then transferred to the acceptor end of tRNA(Pro). In Cereibacter sphaeroides (strain ATCC 17023 / DSM 158 / JCM 6121 / CCUG 31486 / LMG 2827 / NBRC 12203 / NCIMB 8253 / ATH 2.4.1.) (Rhodobacter sphaeroides), this protein is Proline--tRNA ligase.